Reading from the N-terminus, the 104-residue chain is Large ribosomal subunit protein uL23 (104 aa).

The protein belongs to the universal ribosomal protein uL23 family. In terms of assembly, part of the 50S ribosomal subunit. Contacts protein L29, and trigger factor when it is bound to the ribosome.

In terms of biological role, one of the early assembly proteins it binds 23S rRNA. One of the proteins that surrounds the polypeptide exit tunnel on the outside of the ribosome. Forms the main docking site for trigger factor binding to the ribosome. The sequence is that of Large ribosomal subunit protein uL23 from Nostoc punctiforme (strain ATCC 29133 / PCC 73102).